The following is an 837-amino-acid chain: Anaphase-promoting complex subunit 2 (837 aa).

S233, S329, S485, S549, and S712 each carry phosphoserine. Residues 478 to 508 (CLETGQDSEDDSGEPEDWVPDPVDADPVKSS) are disordered. A compositionally biased stretch (acidic residues) spans 483–496 (QDSEDDSGEPEDWV). The residue at position 825 (Y825) is a Phosphotyrosine.

Belongs to the cullin family. The mammalian APC/C is composed at least of 14 distinct subunits ANAPC1, ANAPC2, CDC27/APC3, ANAPC4, ANAPC5, CDC16/APC6, ANAPC7, CDC23/APC8, ANAPC10, ANAPC11, CDC26/APC12, ANAPC13, ANAPC15 and ANAPC16 that assemble into a complex of at least 19 chains with a combined molecular mass of around 1.2 MDa; APC/C interacts with FZR1 and FBXO5. In the context of the APC/C complex, directly interacts with UBE2C and UBE2S. Interacts (via cullin domain) with ANAPC11 and with UBCH10. Interacts with NEUROD2. Interacts with FBXO43; the interaction is direct.

The protein operates within protein modification; protein ubiquitination. Its function is as follows. Together with the RING-H2 protein ANAPC11, constitutes the catalytic component of the anaphase promoting complex/cyclosome (APC/C), a cell cycle-regulated E3 ubiquitin ligase that controls progression through mitosis and the G1 phase of the cell cycle. The APC/C complex acts by mediating ubiquitination and subsequent degradation of target proteins: it mainly mediates the formation of 'Lys-11'-linked polyubiquitin chains and, to a lower extent, the formation of 'Lys-48'- and 'Lys-63'-linked polyubiquitin chains. The APC/C complex catalyzes assembly of branched 'Lys-11'-/'Lys-48'-linked branched ubiquitin chains on target proteins. The CDC20-APC/C complex positively regulates the formation of synaptic vesicle clustering at active zone to the presynaptic membrane in postmitotic neurons. CDC20-APC/C-induced degradation of NEUROD2 drives presynaptic differentiation. This Mus musculus (Mouse) protein is Anaphase-promoting complex subunit 2 (Anapc2).